A 603-amino-acid polypeptide reads, in one-letter code: PEEICTLVIAESFPEDAGIFTCSARNDYGSVTSTAQLVVTSANTENCSYDSMGEPNSDHFQHFPPPPPILETGSYELASQKPSEIQQVNTPNLGFNMAALQMQFNSAERETNGVHPSHGVNGLINGKAYGNKSPPTPAALLSPTKEPPPLLAKPKLGFPKKASRTARIASDEEIQGTKDAVIQDLERKLRFKEDLLNNGQPRLTYEERMARRLLGADSANVFNIQEPEETAANQEYKVSSCEQRLISEIEYRLERSPVEESGDEVQEAEVPVENAAAPFFEMKLKHYKIFEGMPVTFTCRVAGSPKPKIYWFKDGKQISPKSDHYTIQRDVDGTCSLHTTASTLDDDGNYTIMAANTQGRVSCTGRLMVQAVNQRGRSPRSPPGHPHARRPRSRSRDSGDENEPIQERFFRPHFLQAPGDLTVQEGKLCRMDCKVSGLPTPDLSWQLDGKPIRPDSAHKMLVRENGVHSLIIEPVTSRDAGIYTCIATNRAGQNSFNLELVVAAKEAHKAPVFIEKLQNTGVADGYPVRLECRVSGVPPPQIFWKKENESLTHSTDRVSMHQDNHGYICLLIQGATKEDAGWYTVSAKNEAGIVSCTARLDVY.

An interaction with VASP region spans residues 63–67; that stretch reads FPPPP. A Phosphoserine modification is found at serine 133. The disordered stretch occupies residues 134–156; it reads PPTPAALLSPTKEPPPLLAKPKL. Phosphothreonine is present on threonine 136. Residues serine 142, serine 170, serine 256, and serine 261 each carry the phosphoserine modification. The Ig-like C2-type 1 domain maps to 278–362; that stretch reads PFFEMKLKHY…MAANTQGRVS (85 aa). Residues 373 to 402 are disordered; it reads NQRGRSPRSPPGHPHARRPRSRSRDSGDEN. Phosphoserine is present on residues serine 378, serine 381, and serine 393. Serine 395 carries the phosphoserine; by PKB/AKT1 modification. Serine 398 is modified (phosphoserine). 2 consecutive Ig-like C2-type domains span residues 412–503 and 511–601; these read PHFL…LVVA and PVFI…ARLD. Interaction with EZR stretches follow at residues 414-503 and 513-603; these read FLQA…LVVA and FIEK…LDVY. A disulfide bridge links cysteine 433 with cysteine 485.

The protein belongs to the myotilin/palladin family. Interacts with EPS8. Interacts with LASP1. Interacts with VASP. Interacts with ACTN. Interacts with SORBS2. Interacts with PFN1. Interacts with LPP. Interacts with SPIN90. Interacts with SRC. Interacts with EZR. Interacts with RAI14. In terms of processing, phosphorylated predominantly on serines and, to a lesser extent, on tyrosines. Phosphorylation at Ser-395 by PKB/AKT1 modulates cytoskeletal organization and cell motility. As to expression, in adult central nervous system is detected in the brain and spinal cord, specially in the olfactory bulb, cerebral and cerebellar cortices, hippocampus, amygdala, superior colluculus, and superficial laminae of the spinal dorsal horn.

The protein resides in the cytoplasm. It is found in the cytoskeleton. It localises to the cell junction. Its subcellular location is the focal adhesion. The protein localises to the myofibril. The protein resides in the sarcomere. It is found in the z line. It localises to the cell projection. Its subcellular location is the ruffle. The protein localises to the podosome. The protein resides in the lamellipodium. It is found in the axon. It localises to the growth cone. Its function is as follows. Cytoskeletal protein required for organization of normal actin cytoskeleton. Roles in establishing cell morphology, motility, cell adhesion and cell-extracellular matrix interactions in a variety of cell types. May function as a scaffolding molecule with the potential to influence both actin polymerization and the assembly of existing actin filaments into higher-order arrays. Binds to proteins that bind to either monomeric or filamentous actin. Localizes at sites where active actin remodeling takes place, such as lamellipodia and membrane ruffles. Different isoforms may have functional differences. Plays a role in neurite outgrowth and in the establishment of polarity during neuronal morphogenesis. Participates in the acquisition of the reactive astrocyte morphology. This is Palladin (Palld) from Rattus norvegicus (Rat).